Consider the following 500-residue polypeptide: NAD(P)H-quinone oxidoreductase chain 4, chloroplastic (500 aa).

Transmembrane regions (helical) follow at residues 4-24 (FPWLTIIVVFPISAGSLMLFL), 35-55 (YTICICILELLLTTYTFCYNF), 87-107 (IGTILLTGFITTLAILAAFPV), 113-130 (LFHFLMLAMYSGQIGSFS), 134-154 (LLLFFIMWELELIPVYLLLSM), 167-187 (FILYTAGSSIFLLIGVLGISL), 211-231 (IILYIGFLIAFAVKSPLIPLH), 242-262 (HYSTCMLLAGILLKMGAYGLV), 272-292 (AHSMFSPWLMVVGTIQIIYAA), 305-325 (IAYSSVSHMGFIIIGIASITD), 330-350 (GAILQIISHGFIGAALFFLAG), 386-406 (LALPGMSGFVAEFIVFFGIIT), 416-436 (ILIIFVMAIGMILTPIYLLSM), and 466-486 (ISSLLPIIGMGIYPDFVLALA).

Belongs to the complex I subunit 4 family.

The protein localises to the plastid. It is found in the chloroplast thylakoid membrane. The enzyme catalyses a plastoquinone + NADH + (n+1) H(+)(in) = a plastoquinol + NAD(+) + n H(+)(out). It carries out the reaction a plastoquinone + NADPH + (n+1) H(+)(in) = a plastoquinol + NADP(+) + n H(+)(out). The sequence is that of NAD(P)H-quinone oxidoreductase chain 4, chloroplastic from Aethionema grandiflorum (Persian stone-cress).